A 291-amino-acid chain; its full sequence is Alpha-soluble NSF attachment protein (291 aa).

4 TPR repeats span residues 14–51 (ADKRLRGGNFFKMFGGGSSRYDDAASDYTKAANLFKMS), 77–110 (AASSYVLAAGCYKKGNVIDAITCLKAAIEYYTDE), 117–150 (AKHQKEIAELYEAEGDFDQAIASYQIASDYFDGE), and 157–190 (HQCLLKIALFSAQLERYEKSIEIYEQVAAASLDN).

It belongs to the SNAP family. Interacts with nsfA and probably SNARE proteins.

Its subcellular location is the cytoplasmic vesicle membrane. May be required for vesicular transport between the endoplasmic reticulum and the Golgi apparatus. Involved in vesicle fusion with nsfA and probably SNARE proteins. In Dictyostelium discoideum (Social amoeba), this protein is Alpha-soluble NSF attachment protein (snpA).